Here is a 181-residue protein sequence, read N- to C-terminus: Protein TrbB (181 aa).

An N-terminal signal peptide occupies residues 1-22 (MSLTKSLLFTLLLSAAAVQAST). Positions 37 to 172 (TQPAQPAAGT…FMARVDTVLQ (136 aa)) constitute a Thioredoxin domain.

It localises to the periplasm. This chain is Protein TrbB (trbB), found in Escherichia coli (strain K12).